A 273-amino-acid polypeptide reads, in one-letter code: 4-hydroxy-3-methylbut-2-enyl diphosphate reductase (273 aa).

Cysteine 12 provides a ligand contact to [4Fe-4S] cluster. (2E)-4-hydroxy-3-methylbut-2-enyl diphosphate contacts are provided by histidine 36 and histidine 70. Dimethylallyl diphosphate contacts are provided by histidine 36 and histidine 70. Residues histidine 36 and histidine 70 each contribute to the isopentenyl diphosphate site. Cysteine 92 lines the [4Fe-4S] cluster pocket. Histidine 120 contacts (2E)-4-hydroxy-3-methylbut-2-enyl diphosphate. Dimethylallyl diphosphate is bound at residue histidine 120. Histidine 120 serves as a coordination point for isopentenyl diphosphate. The active-site Proton donor is glutamate 122. Position 157 (threonine 157) interacts with (2E)-4-hydroxy-3-methylbut-2-enyl diphosphate. Cysteine 185 is a binding site for [4Fe-4S] cluster. (2E)-4-hydroxy-3-methylbut-2-enyl diphosphate-binding residues include serine 213, serine 214, asparagine 215, and serine 257. Residues serine 213, serine 214, asparagine 215, and serine 257 each contribute to the dimethylallyl diphosphate site. The isopentenyl diphosphate site is built by serine 213, serine 214, asparagine 215, and serine 257.

It belongs to the IspH family. [4Fe-4S] cluster is required as a cofactor.

The catalysed reaction is isopentenyl diphosphate + 2 oxidized [2Fe-2S]-[ferredoxin] + H2O = (2E)-4-hydroxy-3-methylbut-2-enyl diphosphate + 2 reduced [2Fe-2S]-[ferredoxin] + 2 H(+). It catalyses the reaction dimethylallyl diphosphate + 2 oxidized [2Fe-2S]-[ferredoxin] + H2O = (2E)-4-hydroxy-3-methylbut-2-enyl diphosphate + 2 reduced [2Fe-2S]-[ferredoxin] + 2 H(+). The protein operates within isoprenoid biosynthesis; dimethylallyl diphosphate biosynthesis; dimethylallyl diphosphate from (2E)-4-hydroxy-3-methylbutenyl diphosphate: step 1/1. It functions in the pathway isoprenoid biosynthesis; isopentenyl diphosphate biosynthesis via DXP pathway; isopentenyl diphosphate from 1-deoxy-D-xylulose 5-phosphate: step 6/6. In terms of biological role, catalyzes the conversion of 1-hydroxy-2-methyl-2-(E)-butenyl 4-diphosphate (HMBPP) into a mixture of isopentenyl diphosphate (IPP) and dimethylallyl diphosphate (DMAPP). Acts in the terminal step of the DOXP/MEP pathway for isoprenoid precursor biosynthesis. This Helicobacter hepaticus (strain ATCC 51449 / 3B1) protein is 4-hydroxy-3-methylbut-2-enyl diphosphate reductase.